Here is a 310-residue protein sequence, read N- to C-terminus: MPIKIQSDLPAKAELEEENIFVMDENRAISQNIRPLEIIVLNLMPIKQDTELQLLRGLSNTPLQIDVTFLQMSSHVSKNTSASHIKKFYQTFEEIKNNNYDGMIITGAPVEKLDFEEVNYWDELITVMEWSNKHVTSTIHICWGAQAGLYYHYGIKKELLPKKLSGVYKHRVMNRKEPLVRGFDDVFMAPHSRYTQASRQQILDNPRLKVLADSDEAGIYIVLGDGGKEIFVMGHPEYDRLTLDQEYKRDIDKGIEPDLPVNYYPDDDCNRKPLLSWRSHANNLYTNWLNYYVYQITPYDLNESYDNYCI.

Cys-142 acts as the Acyl-thioester intermediate in catalysis. Residues Lys-163 and Ser-192 each coordinate substrate. The active-site Proton acceptor is the His-235. Residue Glu-237 is part of the active site. Position 249 (Arg-249) interacts with substrate.

This sequence belongs to the MetA family.

The protein localises to the cytoplasm. It carries out the reaction L-homoserine + acetyl-CoA = O-acetyl-L-homoserine + CoA. It participates in amino-acid biosynthesis; L-methionine biosynthesis via de novo pathway; O-acetyl-L-homoserine from L-homoserine: step 1/1. In terms of biological role, transfers an acetyl group from acetyl-CoA to L-homoserine, forming acetyl-L-homoserine. The polypeptide is Homoserine O-acetyltransferase (Lachnospira eligens (strain ATCC 27750 / DSM 3376 / VPI C15-48 / C15-B4) (Eubacterium eligens)).